A 526-amino-acid polypeptide reads, in one-letter code: Dual specificity tyrosine-phosphorylation-regulated kinase 2 (526 aa).

2 stretches are compositionally biased toward polar residues: residues 30–40 (TTQPNGLTTLG) and 60–70 (GSSSSLKSTDG). Residues 30–76 (TTQPNGLTTLGKSGLPVVQDRQSESAHRRQGSSSSLKSTDGTGKVKA) form a disordered region. Phosphothreonine; by ATM is present on T31. A Nuclear localization signal motif is present at residues 114-116 (KKR). In terms of domain architecture, Protein kinase spans 147 to 460 (YEVLKVIGKG…PSQALRHPWL (314 aa)). ATP contacts are provided by residues 153 to 161 (IGKGSFGQV), K176, and 226 to 229 (FELL). Catalysis depends on D273, which acts as the Proton acceptor. Phosphotyrosine is present on Y307. S367 is subject to Phosphoserine; by ATM. A disordered region spans residues 462-499 (RRLPKPPTGEKASAKRITESTGAITSISKLPPTSSSAS). Polar residues predominate over residues 480-499 (ESTGAITSISKLPPTSSSAS).

This sequence belongs to the protein kinase superfamily. CMGC Ser/Thr protein kinase family. MNB/DYRK subfamily. As to quaternary structure, interacts with MDM2. Requires Mg(2+) as cofactor. It depends on Mn(2+) as a cofactor. Post-translationally, phosphorylated on serine/threonine residues. Phosphorylation on Thr-31 and Ser-367 by ATM in response to genotoxic stress disrupts MDM2 binding and prevents MDM2-mediated ubiquitination and subsequent proteasome degradation, thus promoting p53/TP53-mediated apoptosis. Ubiquitination in nucleus by MDM2 in normal conditions leads to proteasome degradation.

It is found in the cytoplasm. The protein resides in the nucleus. The catalysed reaction is L-seryl-[protein] + ATP = O-phospho-L-seryl-[protein] + ADP + H(+). It carries out the reaction L-threonyl-[protein] + ATP = O-phospho-L-threonyl-[protein] + ADP + H(+). The enzyme catalyses L-tyrosyl-[protein] + ATP = O-phospho-L-tyrosyl-[protein] + ADP + H(+). Its activity is regulated as follows. Autophosphorylates on tyrosine residues. Functionally, serine/threonine-protein kinase involved in the control of mitotic transition and the regulation of cellular growth and/or development. This is Dual specificity tyrosine-phosphorylation-regulated kinase 2 from Gallus gallus (Chicken).